The chain runs to 347 residues: Inositol 2-dehydrogenase (347 aa).

This sequence belongs to the Gfo/Idh/MocA family. Homotetramer.

The catalysed reaction is myo-inositol + NAD(+) = scyllo-inosose + NADH + H(+). Its function is as follows. Involved in the oxidation of myo-inositol (MI) to 2-keto-myo-inositol (2KMI or 2-inosose). The sequence is that of Inositol 2-dehydrogenase from Rubrobacter xylanophilus (strain DSM 9941 / JCM 11954 / NBRC 16129 / PRD-1).